Here is a 212-residue protein sequence, read N- to C-terminus: MSIGETFAISAHPEGGALFGTISPGMWNQDFIPWIRKTAVDGHLLIVSGSESELGAWRELGARGLSYDEFTFLCPGDRMVWLSEPTEEWLARKRAPMWRCQAVWIQTEKCRLGKNADATLGRAAPHTDAEHLMGMMEGIRELNVHEPQTMVIVSKIGHKNYFSAAGLVTVSFADLAIRPARWVKDRVFAVVRRDDWESDRFRGLCYKWGIEM.

This is an uncharacterized protein from Dryophytes versicolor (chameleon treefrog).